The following is a 206-amino-acid chain: MGYMIVEKHTSELLHLKRSPGIRSWSILVGIASVGLAAAYYSSDSILWKMFYVTGCFFVALQNMEEWEEAVFNKSKNEIELKTFSLYTMLLTLWKRGHEKVLLDLRHLRDVSVQEERVRYLGKGYLVVLRLATGFSYPLTQSATLGSRSDVEALAALLKRFLGLEELQQRLADDDYPDDDDGIEDLGLGDSSDSQDDPDGDDDEEH.

The helical transmembrane segment at 21-43 (GIRSWSILVGIASVGLAAAYYSS) threads the bilayer. The tract at residues 172–206 (ADDDYPDDDDGIEDLGLGDSSDSQDDPDGDDDEEH) is disordered. Acidic residues-rich tracts occupy residues 174-184 (DDYPDDDDGIE) and 193-206 (DSQD…DEEH).

This sequence belongs to the CYBC1 family.

The protein localises to the endoplasmic reticulum membrane. Its function is as follows. Functions as a chaperone necessary for a stable expression of the CYBA and CYBB subunits of the cytochrome b-245 heterodimer. This Danio rerio (Zebrafish) protein is Cytochrome b-245 chaperone 1 homolog.